Consider the following 974-residue polypeptide: Cell division control protein 15 (974 aa).

The Protein kinase domain occupies 25–272; sequence YHLKQVIGRG…ADQLLKHVWI (248 aa). Residues 31-39 and K54 each bind ATP; that span reads IGRGSYGVV. The Proton acceptor role is filled by D146. Positions 360 to 702 are self association domain; it reads CSLENIADTI…ITAICVEMSL (343 aa). The span at 554–563 shows a compositional bias: low complexity; sequence SSSLPLSSSP. The interval 554-592 is disordered; sequence SSSLPLSSSPTRNSPVNSVQSPSRSPVHSLMATRPSSPM. Phosphoserine is present on residues S561 and S567. The segment covering 564 to 579 has biased composition (polar residues); the sequence is TRNSPVNSVQSPSRSP. Positions 751 to 974 are auto-inhibitory domain; sequence TVGSSESHSV…FSVPITTFQT (224 aa). T870 is subject to Phosphothreonine. A disordered region spans residues 941–974; that stretch reads AAIGSSPTKDERSNLRSSKDKSDGFSVPITTFQT. The segment covering 948–963 has biased composition (basic and acidic residues); the sequence is TKDERSNLRSSKDKSD.

The protein belongs to the protein kinase superfamily. Ser/Thr protein kinase family. In terms of assembly, homodimer. Interacts with TEM1. Post-translationally, phosphorylation by CDK1 reduces the binding to the mother spindle pole body. The extent of phosphorylation gradually increases during cell-cycle progression until some point during late anaphase/telophase when it is rapidly dephosphorylated by CDC14. Phosphorylation inhibits kinase activity and dephosphorylation by CDC14 activates CDC15.

The protein localises to the cytoplasm. It is found in the cytoskeleton. The protein resides in the spindle pole. Its subcellular location is the bud neck. It catalyses the reaction L-seryl-[protein] + ATP = O-phospho-L-seryl-[protein] + ADP + H(+). The enzyme catalyses L-threonyl-[protein] + ATP = O-phospho-L-threonyl-[protein] + ADP + H(+). With respect to regulation, kinase activity is inhibited by phosphorylation and activated by dephosphorylation by CDC14. Its function is as follows. Protein kinase of the mitotic exit network (MEN) essential for late nuclear division in the mitotic cycle. Promotes mitotic exit by phosphorylating DBF2 and directly switching on DBF2 kinase activity. Involved in the localization of DBF2 and DBF20 to the neck which is necessary to undergo cytokinesis. Plays a role in segregation of chromosomes during recovery from spindle checkpoint activation. Required for spindle pole localization of CDK1 and inactivation of CDC2 kinase activity at the end of mitosis. Required for spindle disassembly after meiosis II and plays a role in spore morphogenesis. This chain is Cell division control protein 15 (CDC15), found in Saccharomyces cerevisiae (strain ATCC 204508 / S288c) (Baker's yeast).